The primary structure comprises 373 residues: Peptide chain release factor 2 (373 aa).

The residue at position 252 (Gln-252) is an N5-methylglutamine.

The protein belongs to the prokaryotic/mitochondrial release factor family. In terms of processing, methylated by PrmC. Methylation increases the termination efficiency of RF2.

The protein resides in the cytoplasm. Peptide chain release factor 2 directs the termination of translation in response to the peptide chain termination codons UGA and UAA. This chain is Peptide chain release factor 2, found in Staphylococcus saprophyticus subsp. saprophyticus (strain ATCC 15305 / DSM 20229 / NCIMB 8711 / NCTC 7292 / S-41).